We begin with the raw amino-acid sequence, 231 residues long: MAKLTKRQKAIAEKIEAGKSYNFVDAAALLTELSTVKFSESIDVAVNLGVDPRKSDQVVRSATVLPHGTGKTVRVAVFTQGPAAEAALAAGADRVGMDDLAAEMKAGDLNYDVVIASPDAMRVVGQLGQVLGPRGLMPNPKVGTVTPDVANAVKNAKAGQVRYRTDKNGIIHTSVGKVGFDAVKLKENVEALIADLKRIKPASSKGIYVKRITLSTTMGPGLVIDQGSLEA.

It belongs to the universal ribosomal protein uL1 family. Part of the 50S ribosomal subunit.

In terms of biological role, binds directly to 23S rRNA. The L1 stalk is quite mobile in the ribosome, and is involved in E site tRNA release. Protein L1 is also a translational repressor protein, it controls the translation of the L11 operon by binding to its mRNA. The chain is Large ribosomal subunit protein uL1 from Pseudomonas syringae pv. syringae (strain B728a).